The sequence spans 150 residues: SPbeta prophage-derived uncharacterized protein YoqH (150 aa).

Residues 1-23 (MKRFILVLSFLSIIVAYPIQTNA) form the signal peptide.

This is SPbeta prophage-derived uncharacterized protein YoqH (yoqH) from Bacillus subtilis (strain 168).